Here is a 512-residue protein sequence, read N- to C-terminus: 2-isopropylmalate synthase (512 aa).

The Pyruvate carboxyltransferase domain occupies 5–268 (LIIFDTTLRD…ELGIDTQHIV (264 aa)). 4 residues coordinate Mn(2+): D14, H202, H204, and N239. A regulatory domain region spans residues 394-512 (GFVSLSQRSE…SKAERVAAQG (119 aa)).

This sequence belongs to the alpha-IPM synthase/homocitrate synthase family. LeuA type 1 subfamily. In terms of assembly, homodimer. The cofactor is Mn(2+).

Its subcellular location is the cytoplasm. It carries out the reaction 3-methyl-2-oxobutanoate + acetyl-CoA + H2O = (2S)-2-isopropylmalate + CoA + H(+). It participates in amino-acid biosynthesis; L-leucine biosynthesis; L-leucine from 3-methyl-2-oxobutanoate: step 1/4. Its function is as follows. Catalyzes the condensation of the acetyl group of acetyl-CoA with 3-methyl-2-oxobutanoate (2-ketoisovalerate) to form 3-carboxy-3-hydroxy-4-methylpentanoate (2-isopropylmalate). The protein is 2-isopropylmalate synthase of Paracidovorax citrulli (strain AAC00-1) (Acidovorax citrulli).